Reading from the N-terminus, the 287-residue chain is ATP synthase gamma chain (287 aa).

The protein belongs to the ATPase gamma chain family. As to quaternary structure, F-type ATPases have 2 components, CF(1) - the catalytic core - and CF(0) - the membrane proton channel. CF(1) has five subunits: alpha(3), beta(3), gamma(1), delta(1), epsilon(1). CF(0) has three main subunits: a, b and c.

The protein resides in the cell inner membrane. Functionally, produces ATP from ADP in the presence of a proton gradient across the membrane. The gamma chain is believed to be important in regulating ATPase activity and the flow of protons through the CF(0) complex. The protein is ATP synthase gamma chain of Geobacter metallireducens (strain ATCC 53774 / DSM 7210 / GS-15).